A 519-amino-acid polypeptide reads, in one-letter code: 2,3-bisphosphoglycerate-independent phosphoglycerate mutase (519 aa).

Asp18 and Ser68 together coordinate Mn(2+). Ser68 serves as the catalytic Phosphoserine intermediate. Residues His129, 159 to 160 (RD), Arg191, Arg197, 267 to 270 (RADR), and Lys341 each bind substrate. Mn(2+) is bound by residues Asp408, His412, Asp449, His450, and His468.

This sequence belongs to the BPG-independent phosphoglycerate mutase family. Monomer. The cofactor is Mn(2+).

The catalysed reaction is (2R)-2-phosphoglycerate = (2R)-3-phosphoglycerate. Its pathway is carbohydrate degradation; glycolysis; pyruvate from D-glyceraldehyde 3-phosphate: step 3/5. In terms of biological role, catalyzes the interconversion of 2-phosphoglycerate and 3-phosphoglycerate. The chain is 2,3-bisphosphoglycerate-independent phosphoglycerate mutase from Coxiella burnetii (strain RSA 331 / Henzerling II).